We begin with the raw amino-acid sequence, 401 residues long: MHCDVLWHNAQLMTLDAAAGGLGIVDDGIVACRHGHIVYAGAAAQAPALQPDTAHDCQRRWISPGLIDCHTHLVYAGNRANEFEQRLRGASYADIAAAGGGIVATVRATRAADDAALLAASLPRLDAMLAEGVTTLEIKSGYGLALDDEIKQLRVARQLGAQRKVEVVPTFLGAHAVPPGEQAQPYIDQVCTQMIPAIAAQGLAEAVDVFCEHLAFSQAQAEQVFIAAQAHGLRIKIHAEQLSNQHGAELAARYGALSADHIEYLDQHGVAAMAAAGTVAVLLPGAFYFTRDTQLPPIAALRTAGVPLALATDCNPGTSPLTSPLLAMNMAATLFRMTVDECIAGFTREAARALGRSERLGQLRAGMDCDLAIWNIDAPADLVYRMGFNPLHARVWRGHPC.

Histidine 70 and histidine 72 together coordinate Fe(3+). Residues histidine 70 and histidine 72 each contribute to the Zn(2+) site. Residues arginine 79, tyrosine 142, and histidine 175 each coordinate 4-imidazolone-5-propanoate. Tyrosine 142 serves as a coordination point for N-formimidoyl-L-glutamate. Histidine 238 is a Fe(3+) binding site. Residue histidine 238 coordinates Zn(2+). Position 241 (glutamine 241) interacts with 4-imidazolone-5-propanoate. Residue aspartate 313 coordinates Fe(3+). Position 313 (aspartate 313) interacts with Zn(2+). N-formimidoyl-L-glutamate-binding residues include asparagine 315 and glycine 317. Threonine 318 provides a ligand contact to 4-imidazolone-5-propanoate.

Belongs to the metallo-dependent hydrolases superfamily. HutI family. Requires Zn(2+) as cofactor. The cofactor is Fe(3+).

It localises to the cytoplasm. The catalysed reaction is 4-imidazolone-5-propanoate + H2O = N-formimidoyl-L-glutamate. Its pathway is amino-acid degradation; L-histidine degradation into L-glutamate; N-formimidoyl-L-glutamate from L-histidine: step 3/3. Functionally, catalyzes the hydrolytic cleavage of the carbon-nitrogen bond in imidazolone-5-propanoate to yield N-formimidoyl-L-glutamate. It is the third step in the universal histidine degradation pathway. The chain is Imidazolonepropionase from Xanthomonas axonopodis pv. citri (strain 306).